The following is a 380-amino-acid chain: MDFNYDDTQKKHAAMIAQVCAEQLAACGNEHSRYFTARQWAICGEAGLLGLSIPREYGGQGLGALSTAIAMHAFGLGCTDMGLVFAAAAHQFACAMPIVEFATAETKRDVLPKLASGEFIGSNAITEPEAGSDSSNLKSRAWPQADGSYRLDGHKSFAGNAPIADIFVTYATTQPEYGALGVSGFIVHRSSAGLRVSEPLDKVCLRSCPAGEVFFDDCRVPEVNRLGEEGQGRQVFQSSMGWERACLFAAFLGMMERQLEQTIEHARTRRQFGKPIGDNQAVSHRIAQMKLRLESARLLLFRACWGMDQGDPGQLNIALSKLAISEGALASSIDAVRIFGGRGCLESFGIEAMLRDSIGTTIFSGTSDMQHEIIARELKL.

E243 serves as the catalytic Proton acceptor. Positions 269 and 280 each coordinate FAD.

The protein belongs to the acyl-CoA dehydrogenase family. The cofactor is FAD.

The catalysed reaction is L-prolyl-[peptidyl-carrier protein] + 2 oxidized [electron-transfer flavoprotein] + H(+) = (1H-pyrrole-2-carbonyl)-[peptidyl-carrier protein] + 2 reduced [electron-transfer flavoprotein]. Involved in the biosynthesis of pyoluteorin. Catalyzes the desaturation of the L-prolyl-[PltL] to yield 1H-pyrrole-2-carbonyl-[PltL]. The chain is L-prolyl-[peptidyl-carrier protein] dehydrogenase from Pseudomonas fluorescens (strain ATCC BAA-477 / NRRL B-23932 / Pf-5).